A 371-amino-acid polypeptide reads, in one-letter code: Repetitive proline-rich cell wall protein 2 (371 aa).

The signal sequence occupies residues 1–22 (MASSNLLVLLLFALFAIPRGLA). 66 repeat units span residues 32-36 (PPVYK), 37-41 (PPVEK), 42-46 (PPVYK), 47-51 (PPVEK), 52-56 (PPVYK), 57-61 (PPVEK), 62-66 (PPVYK), 67-71 (PPVEK), 72-76 (PPVYK), 77-81 (PPVEK), 82-86 (PPVYK), 87-91 (PPVEK), 92-96 (PPVYK), 97-101 (PPVEK), 102-106 (PPVYK), 107-111 (PPVEK), 112-116 (PPVYK), 117-121 (PPVEK), 122-126 (PPVYK), 127-131 (PPVEK), 132-136 (PPVYK), 137-141 (PPVEK), 142-146 (PPVYK), 147-151 (PPVEK), 152-156 (PPVYK), 157-161 (PPVEK), 162-166 (PPVYK), 167-171 (PPVEK), 172-176 (PPVYK), 177-181 (PPVEK), 182-186 (PPVYK), 187-191 (PPVEK), 192-196 (PPVYK), 197-201 (PPVEK), 202-206 (PPVYK), 207-211 (PPVEK), 212-216 (PPVYK), 217-221 (PPVEK), 222-226 (PPVYK), 227-231 (PPVEK), 232-236 (PPIYK), 237-241 (PPVEK), 242-246 (PPVYK), 247-251 (PPVEK), 252-256 (PPVYK), 257-261 (PPVEK), 262-266 (PPIYK), 267-271 (PPVEK), 272-276 (PPVYK), 277-281 (PPVEK), 282-286 (PPVYK), 287-291 (PPVEK), 292-296 (PPVYK), 297-301 (PPVEK), 302-306 (PPVYK), 307-311 (PPVEK), 312-316 (PPVYK), 317-321 (PPVYK), 322-326 (PPVYK), 327-331 (PPVEK), 332-336 (PPVYK), 337-341 (PPVYK), 342-346 (PPVEK), 347-351 (PPVYK), 352-356 (PPVYK), and 357-361 (PPVEK). The interval 32-366 (PPVYKPPVEK…PPVEKPPVYG (335 aa)) is 67 X 5 AA approximate tandem repeats of P-P-[IV]-[EY]-K. The segment at 49–317 (VEKPPVYKPP…PVEKPPVYKP (269 aa)) is disordered. The tract at residues 339–371 (VYKPPVEKPPVYKPPVYKPPVEKPPVYGPPHHP) is disordered. One copy of the 67; approximate repeat lies at 362-366 (PPVYG).

The protein belongs to the plant proline-rich protein superfamily. ENOD12 family. In terms of tissue distribution, expressed in hypocotyls, roots and mature root nodules.

It localises to the secreted. It is found in the cell wall. In terms of biological role, this is a developmentally regulated putative cell wall protein. The chain is Repetitive proline-rich cell wall protein 2 (PRP2) from Medicago truncatula (Barrel medic).